We begin with the raw amino-acid sequence, 850 residues long: Protein argonaute 8 (850 aa).

The disordered stretch occupies residues 1–30 (MDTTLPPPQHMEREPLKSKSSLLPMTRRGN). In terms of domain architecture, PAZ spans 247 to 361 (PVVDFLIANQ…FPIELCELVS (115 aa)). A Piwi domain is found at 518-811 (QSILGEVPPK…AAAQMATAMK (294 aa)).

The protein belongs to the argonaute family. Ago subfamily.

Functionally, involved in RNA-mediated post-transcriptional gene silencing (PTGS). Main component of the RNA-induced silencing complex (RISC) that binds to a short guide RNA such as a microRNA (miRNA) or small interfering RNA (siRNA). RISC uses the mature miRNA or siRNA as a guide for slicer-directed cleavage of homologous mRNAs to repress gene expression. This Arabidopsis thaliana (Mouse-ear cress) protein is Protein argonaute 8 (AGO8).